The primary structure comprises 415 residues: MNNELIIKGKKAKEASYTLSFASTNEKNNGLLKISESLIKRCDEILEENKKDIEKAIEKGTSNAMLDRLKLDEERVKSIANAVADVIKLDDPIGEVTSMFKRPNGLRIGVQRVPLGVVGIIYEARPNVTADAAALCLKTGNAVILRGGSEAINSNLKIVDIISDALKEAGLPEGSVQILEDTSRETATDFMRLNDYLDVLIPRGGAGLIKAVVNNATVPVIETGVGNCHIYIDDEADINMGVDIIVNAKTSRPAVCNAAEKLLVNEKIAEEFLPVAIKALKEKGVEIRGCEKTKVIVNDINLATEEDWGKEYLDYILGVKIVKDLDEAISHINKYGTKHSESIVTKNYFNSEKFLQRVDAAAVYVNASTRFTDGGEFGFGAEIGISTQKLHARGPMGLKELTTNKYIIYGNGQVR.

This sequence belongs to the gamma-glutamyl phosphate reductase family.

Its subcellular location is the cytoplasm. The catalysed reaction is L-glutamate 5-semialdehyde + phosphate + NADP(+) = L-glutamyl 5-phosphate + NADPH + H(+). The protein operates within amino-acid biosynthesis; L-proline biosynthesis; L-glutamate 5-semialdehyde from L-glutamate: step 2/2. Functionally, catalyzes the NADPH-dependent reduction of L-glutamate 5-phosphate into L-glutamate 5-semialdehyde and phosphate. The product spontaneously undergoes cyclization to form 1-pyrroline-5-carboxylate. This chain is Gamma-glutamyl phosphate reductase, found in Clostridium perfringens (strain SM101 / Type A).